The chain runs to 784 residues: Lon protease (784 aa).

A Lon N-terminal domain is found at 6 to 207 (LPLMALRDMV…TVITTLTSNI (202 aa)). Residue 356 to 363 (GPPGVGKT) participates in ATP binding. The 182-residue stretch at 592–773 (EDQIGSTTGL…DQVLKHALVE (182 aa)) folds into the Lon proteolytic domain. Active-site residues include S679 and K722.

Belongs to the peptidase S16 family. In terms of assembly, homohexamer. Organized in a ring with a central cavity.

The protein localises to the cytoplasm. It catalyses the reaction Hydrolysis of proteins in presence of ATP.. In terms of biological role, ATP-dependent serine protease that mediates the selective degradation of mutant and abnormal proteins as well as certain short-lived regulatory proteins. Required for cellular homeostasis and for survival from DNA damage and developmental changes induced by stress. Degrades polypeptides processively to yield small peptide fragments that are 5 to 10 amino acids long. Binds to DNA in a double-stranded, site-specific manner. This is Lon protease from Rickettsia prowazekii (strain Madrid E).